The following is a 1205-amino-acid chain: MGNLKSVGQEPGPPCGLGLGLGLGLCGKQGPATPAPEPSRAPAPATPHAPEHSPAPNSPTLTRPPEGPKFPRVKNWEVGSITYDTLCAQSQQDGPCTPRRCLGSLVLPRKLQSRPSPGPPPAEQLLSQARDFINQYYSSIKRSGSQAHEERLQEVEAEVATTGTYHLGESELVFGAKQAWRNAPRCVGRIQWGKLQVFDARDCSSAQEMFTYICNHIKYATNRGNLRSAITVFPQRTPGRGDFRIWNSQLVRYAGYRQQDGSVRGDPANVEITELCIQHGWTPGNGRFDVLPLLLQAPDEPPELFALPPELVLEVPLEHPTLEWFAALGLRWYALPAVSNMLLEIGGLEFPAAPFSGWYMSTEIGTRNLCDPHRYNILEDVAVCMDLDTRTTSSLWKDKAAVEINLAVLHSYQLAKVTIVDHHAATASFMKHLENEQKARGGCPADWAWIVPPISGSLTPVFHQEMVNYVLSPAFRYQPDPWKGSAAKGTGIARKKTFKEVANAVKISASLMATVMPKRVKASILYASETVRAQSYAQQLGRLFRKAFDPRVLCMDEYDVVSLEHETLVLVVTSTFGNGDPPENGESFAAALMEMSGPYNGSPRPEQHRSYKIRFNSVSCSDPLVSSWRRKRKESSNTDSAGALGTLRFCVFGLGSRAYPHFCAFARAVDTRLEELGGERLLQLGQGDELCGQEEAFRGWAQAAFQASCETFCVGEDAKAAARDIFSPKRSWKRQRYRLSAQVEGLQLLPGLVHVHRRKMFQATVLSVENLQSSKSTRATILVRLDTEGQEGLQYQPGDHIGICPPNRTGLVEALLSRVEDPTPPTESVGVEQLEKGSPGGPPPSWVRDPRLPPYTLRQALTFFLDITSPPSPRLLRVLSTLAEEPSEQQELETLSQDPRRYEEWKWFRCPTLLEVLEQFPSVALPTPLLLTQLALLQPRYYSVSSAPSTYPGEIHPTVAVLAYRTQDGLGPLHYGVCSTWLGQLKPGDPVPCFIRAAPSFRLPPDPSLPCILVGPGTGIAPFRGFWQERLHDIESKGLQPAPMTLVFGCRCSQLDHLYRDEVQDAQQRGVFGRVLTAFSREPDSPKTYVQDILRTELAAEVHRVLCLERGHMFVCGDVTMATSVLQTVQRILATEGNMELDEAGDVIGVLRDQQRYHEDIFGLTLRTQEVTSRIRTQSFSLQERHLRGAVPWTFDPPGPDTPGP.

Residues 1-73 form a disordered region; sequence MGNLKSVGQE…PPEGPKFPRV (73 aa). Gly2 carries N-myristoyl glycine lipidation. Residues Cys15 and Cys26 are each lipidated (S-palmitoyl cysteine). Over residues 15–27 the composition is skewed to gly residues; the sequence is CGLGLGLGLGLCG. Residues 33-47 are compositionally biased toward pro residues; sequence TPAPEPSRAPAPATP. 2 residues coordinate Zn(2+): Cys96 and Cys101. The tract at residues 100–488 is interaction with NOSIP; the sequence is RCLGSLVLPR…PDPWKGSAAK (389 aa). Ser104 contacts (6R)-L-erythro-5,6,7,8-tetrahydrobiopterin. Ser116 carries the phosphoserine; by CDK5 modification. Cys186 contacts heme b. Gln249, Trp358, Tyr359, Glu363, and Asn368 together coordinate L-arginine. (6R)-L-erythro-5,6,7,8-tetrahydrobiopterin-binding residues include Ala448, Trp449, and Phe462. Tyr477 is a heme b binding site. Residues 492–512 form a calmodulin-binding region; that stretch reads IARKKTFKEVANAVKISASLM. Thr497 carries the phosphothreonine; by AMPK modification. The 184-residue stretch at 522–705 folds into the Flavodoxin-like domain; that stretch reads ASILYASETV…AFRGWAQAAF (184 aa). Residues Ser528, Glu529, Thr530, Arg532, Ser574, and Thr575 each coordinate FMN. A phosphoserine mark is found at Ser617, Ser635, and Ser640. Residues Ser656, Cys663, Glu689, and Gln693 each coordinate FMN. Residues 758-1004 enclose the FAD-binding FR-type domain; that stretch reads RKMFQATVLS…IRAAPSFRLP (247 aa). Arg778 is an NADP(+) binding site. His800 serves as a coordination point for FAD. A disordered region spans residues 820 to 848; that stretch reads EDPTPPTESVGVEQLEKGSPGGPPPSWVR. Phosphoserine is present on Ser838. Positions 940, 942, 943, 958, 960, 964, 977, 978, and 979 each coordinate FAD. Positions 1018, 1051, 1080, 1081, 1087, 1089, and 1091 each coordinate NADP(+). A Phosphothreonine modification is found at Thr1177. Ser1179 carries the phosphoserine; by AMPK modification. A Phosphoserine modification is found at Ser1181.

The protein belongs to the NOS family. In terms of assembly, homodimer. Interacts with NOSIP and NOSTRIN. Interacts with HSP90AB1. Forms a complex with ASL, ASS1 and SLC7A1; the complex regulates cell-autonomous L-arginine synthesis and citrulline recycling while channeling extracellular L-arginine to nitric oxide synthesis pathway. Heme b serves as cofactor. It depends on FAD as a cofactor. FMN is required as a cofactor. Requires (6R)-L-erythro-5,6,7,8-tetrahydrobiopterin as cofactor. In terms of processing, phosphorylation by AMPK at Ser-1179 in the presence of Ca(2+)-calmodulin (CaM) activates activity. In absence of Ca(2+)-calmodulin, AMPK also phosphorylates Thr-497, resulting in inhibition of activity. Phosphorylation of Ser-116 by CDK5 reduces activity.

Its subcellular location is the membrane. It is found in the caveola. The protein localises to the cytoplasm. The protein resides in the cytoskeleton. It localises to the golgi apparatus. Its subcellular location is the cell membrane. It carries out the reaction 2 L-arginine + 3 NADPH + 4 O2 + H(+) = 2 L-citrulline + 2 nitric oxide + 3 NADP(+) + 4 H2O. With respect to regulation, stimulated by calcium/calmodulin. Inhibited by NOSIP and NOSTRIN. Functionally, produces nitric oxide (NO) which is implicated in vascular smooth muscle relaxation through a cGMP-mediated signal transduction pathway. NO mediates vascular endothelial growth factor (VEGF)-induced angiogenesis in coronary vessels and promotes blood clotting through the activation of platelets. The chain is Nitric oxide synthase 3 (NOS3) from Sus scrofa (Pig).